Reading from the N-terminus, the 335-residue chain is Ethanol acetyltransferase 1 (335 aa).

Positions 48–300 constitute an AB hydrolase-1 domain; the sequence is PIVFVHGIFG…NSAHDILDQR (253 aa). Residues Ser-121, Asp-145, and His-294 each act as charge relay system in the active site.

This sequence belongs to the AB hydrolase superfamily.

It is found in the mitochondrion. It catalyses the reaction ethanol + acetyl-CoA = ethyl acetate + CoA. The enzyme catalyses acetyl-CoA + H2O = acetate + CoA + H(+). It carries out the reaction ethyl acetate + H2O = ethanol + acetate + H(+). Alcohol acetyltransferase that catalyzes the synthesis of ethyl acetate from ethanol and acetyl-CoA. Can also function as a thioesterase by hydrolyzing acetyl-CoA in the absence of ethanol, as well as esterase hydrolyzing ethyl acetate. The polypeptide is Ethanol acetyltransferase 1 (EAT1) (Cyberlindnera fabianii (Yeast)).